A 366-amino-acid polypeptide reads, in one-letter code: tRNA/tmRNA (uracil-C(5))-methyltransferase (366 aa).

Positions 190, 218, 223, 239, and 299 each coordinate S-adenosyl-L-methionine. Residue Cys-324 is the Nucleophile of the active site. Residue Glu-358 is the Proton acceptor of the active site.

This sequence belongs to the class I-like SAM-binding methyltransferase superfamily. RNA M5U methyltransferase family. TrmA subfamily.

It catalyses the reaction uridine(54) in tRNA + S-adenosyl-L-methionine = 5-methyluridine(54) in tRNA + S-adenosyl-L-homocysteine + H(+). It carries out the reaction uridine(341) in tmRNA + S-adenosyl-L-methionine = 5-methyluridine(341) in tmRNA + S-adenosyl-L-homocysteine + H(+). Functionally, dual-specificity methyltransferase that catalyzes the formation of 5-methyluridine at position 54 (m5U54) in all tRNAs, and that of position 341 (m5U341) in tmRNA (transfer-mRNA). The polypeptide is tRNA/tmRNA (uracil-C(5))-methyltransferase (Salmonella arizonae (strain ATCC BAA-731 / CDC346-86 / RSK2980)).